A 95-amino-acid polypeptide reads, in one-letter code: Co-chaperonin GroES (95 aa).

This sequence belongs to the GroES chaperonin family. In terms of assembly, heptamer of 7 subunits arranged in a ring. Interacts with the chaperonin GroEL.

Its subcellular location is the cytoplasm. In terms of biological role, together with the chaperonin GroEL, plays an essential role in assisting protein folding. The GroEL-GroES system forms a nano-cage that allows encapsulation of the non-native substrate proteins and provides a physical environment optimized to promote and accelerate protein folding. GroES binds to the apical surface of the GroEL ring, thereby capping the opening of the GroEL channel. This Chlorobium phaeobacteroides (strain BS1) protein is Co-chaperonin GroES.